The chain runs to 1653 residues: Protein TOPAZ1 (1653 aa).

Disordered regions lie at residues 1-94 (MRPP…TDLV), 284-303 (YSVE…KSGK), and 415-442 (ISST…SETE). Residues 63–78 (GREETEGDKLAKENGK) show a composition bias toward basic and acidic residues. The span at 423 to 442 (SDGHHMEKRSPRGDLRSETE) shows a compositional bias: basic and acidic residues.

As to expression, restricted to testis, where it localizes to germ cells.

Its subcellular location is the cytoplasm. It localises to the cytosol. Its function is as follows. Important for normal spermatogenesis and male fertility. Specifically required for progression to the post-meiotic stages of spermatocyte development. Seems to be necessary for normal expression levels of a number of testis-expressed gene transcripts, although its role in this process is unclear. This Mus musculus (Mouse) protein is Protein TOPAZ1.